The following is a 67-amino-acid chain: Conotoxin LiC33 (67 aa).

Residues 1 to 22 (MRCVPVFIILLLLSPSAPSVDA) form the signal peptide. A propeptide spanning residues 23–48 (HPKTKDDVPLASFHDDAKRTLQRLWI) is cleaved from the precursor. The residue at position 63 (Phe-63) is a Phenylalanine amide. A propeptide spanning residues 65–67 (KGK) is cleaved from the precursor.

It belongs to the conotoxin T superfamily. In terms of processing, contains 2 disulfide bonds that can be either 'C1-C3, C2-C4' or 'C1-C4, C2-C3', since these disulfide connectivities have been observed for conotoxins with cysteine framework V (for examples, see AC P0DQQ7 and AC P81755). As to expression, expressed by the venom duct.

Its subcellular location is the secreted. The sequence is that of Conotoxin LiC33 from Conus lividus (Livid cone).